A 393-amino-acid polypeptide reads, in one-letter code: Acetate kinase (393 aa).

Asn10 provides a ligand contact to Mg(2+). Position 17 (Lys17) interacts with ATP. Arg89 contacts substrate. Asp146 serves as the catalytic Proton donor/acceptor. ATP is bound by residues His204–Gly208, Asp278–Arg280, and Gly323–Asn327. Glu376 provides a ligand contact to Mg(2+).

The protein belongs to the acetokinase family. In terms of assembly, homodimer. The cofactor is Mg(2+). Mn(2+) is required as a cofactor.

The protein resides in the cytoplasm. The catalysed reaction is acetate + ATP = acetyl phosphate + ADP. It participates in metabolic intermediate biosynthesis; acetyl-CoA biosynthesis; acetyl-CoA from acetate: step 1/2. Its function is as follows. Catalyzes the formation of acetyl phosphate from acetate and ATP. Can also catalyze the reverse reaction. In Mycoplasma genitalium (strain ATCC 33530 / DSM 19775 / NCTC 10195 / G37) (Mycoplasmoides genitalium), this protein is Acetate kinase.